Consider the following 498-residue polypeptide: Phosphonates import ATP-binding protein PhnC (498 aa).

The interval 1-27 (MPQRPEAARAGPVAGPDAASKPAPGPA) is disordered. The region spanning 28–269 (LTLRGAGRAY…DLGELYEARR (242 aa)) is the ABC transporter domain. An ATP-binding site is contributed by 60-67 (GPSGAGKS). A lysR substrate binding domain region spans residues 270-498 (GAADPARAPA…LEVARAEVPP (229 aa)).

This sequence belongs to the ABC transporter superfamily. Phosphonates importer (TC 3.A.1.9.1) family. The complex is composed of two ATP-binding proteins (PhnC), two transmembrane proteins (PhnE) and a solute-binding protein (PhnD).

The protein resides in the cell inner membrane. It catalyses the reaction phosphonate(out) + ATP + H2O = phosphonate(in) + ADP + phosphate + H(+). Part of the ABC transporter complex PhnCDE involved in phosphonates import. Responsible for energy coupling to the transport system. The chain is Phosphonates import ATP-binding protein PhnC from Anaeromyxobacter dehalogenans (strain 2CP-C).